A 513-amino-acid chain; its full sequence is Histidine--tRNA ligase (513 aa).

The transit peptide at methionine 1 to glutamate 24 directs the protein to the mitochondrion. The region spanning aspartate 3 to alanine 59 is the WHEP-TRS domain. Residues aspartate 130 to threonine 132, arginine 157, glutamine 173, aspartate 177, arginine 326, and tyrosine 330 to tyrosine 331 each bind L-histidine.

Belongs to the class-II aminoacyl-tRNA synthetase family.

The protein localises to the cytoplasm. Its subcellular location is the mitochondrion. It catalyses the reaction tRNA(His) + L-histidine + ATP = L-histidyl-tRNA(His) + AMP + diphosphate + H(+). Functionally, catalyzes the aminoacylation of histidyl-tRNA. This is Histidine--tRNA ligase from Danio rerio (Zebrafish).